The sequence spans 170 residues: Regulator of ribonuclease activity A (170 aa).

It belongs to the RraA family. Homotrimer. Binds to both RNA-binding sites in the C-terminal region of Rne and to RhlB.

Its subcellular location is the cytoplasm. Globally modulates RNA abundance by binding to RNase E (Rne) and regulating its endonucleolytic activity. Can modulate Rne action in a substrate-dependent manner by altering the composition of the degradosome. Modulates RNA-binding and helicase activities of the degradosome. In Psychromonas ingrahamii (strain DSM 17664 / CCUG 51855 / 37), this protein is Regulator of ribonuclease activity A.